Consider the following 469-residue polypeptide: Asparagine--tRNA ligase (469 aa).

The protein belongs to the class-II aminoacyl-tRNA synthetase family. Homodimer.

Its subcellular location is the cytoplasm. The catalysed reaction is tRNA(Asn) + L-asparagine + ATP = L-asparaginyl-tRNA(Asn) + AMP + diphosphate + H(+). The protein is Asparagine--tRNA ligase of Porphyromonas gingivalis (strain ATCC BAA-308 / W83).